The sequence spans 300 residues: Mycothiol acetyltransferase (300 aa).

2 N-acetyltransferase domains span residues 4 to 140 (IDWR…RPLT) and 151 to 300 (VRLA…AVAD). Residue D36 coordinates 1D-myo-inositol 2-(L-cysteinylamino)-2-deoxy-alpha-D-glucopyranoside. An acetyl-CoA-binding site is contributed by 79–81 (LVV). 1D-myo-inositol 2-(L-cysteinylamino)-2-deoxy-alpha-D-glucopyranoside contacts are provided by E178, K219, and E227. Residue 231–233 (VGV) coordinates acetyl-CoA. Y269 lines the 1D-myo-inositol 2-(L-cysteinylamino)-2-deoxy-alpha-D-glucopyranoside pocket. 274 to 279 (NGAAVK) is an acetyl-CoA binding site.

The protein belongs to the acetyltransferase family. MshD subfamily. As to quaternary structure, monomer.

It carries out the reaction 1D-myo-inositol 2-(L-cysteinylamino)-2-deoxy-alpha-D-glucopyranoside + acetyl-CoA = mycothiol + CoA + H(+). Functionally, catalyzes the transfer of acetyl from acetyl-CoA to desacetylmycothiol (Cys-GlcN-Ins) to form mycothiol. This chain is Mycothiol acetyltransferase, found in Mycobacterium sp. (strain JLS).